The following is a 137-amino-acid chain: Nucleoside diphosphate kinase (137 aa).

Residues Lys9, Phe57, Arg85, Thr91, Arg102, and Asn112 each coordinate ATP. The active-site Pros-phosphohistidine intermediate is the His115.

Belongs to the NDK family. As to quaternary structure, homotetramer. Mg(2+) serves as cofactor.

Its subcellular location is the cytoplasm. It catalyses the reaction a 2'-deoxyribonucleoside 5'-diphosphate + ATP = a 2'-deoxyribonucleoside 5'-triphosphate + ADP. It carries out the reaction a ribonucleoside 5'-diphosphate + ATP = a ribonucleoside 5'-triphosphate + ADP. Major role in the synthesis of nucleoside triphosphates other than ATP. The ATP gamma phosphate is transferred to the NDP beta phosphate via a ping-pong mechanism, using a phosphorylated active-site intermediate. The polypeptide is Nucleoside diphosphate kinase (Campylobacter lari (strain RM2100 / D67 / ATCC BAA-1060)).